The chain runs to 811 residues: LPS-assembly protein LptD (811 aa).

The N-terminal stretch at 1 to 17 is a signal peptide; that stretch reads MTEPNRARKTRQRTAFA. Positions 1-22 are disordered; sequence MTEPNRARKTRQRTAFAAPDQR.

The protein belongs to the LptD family. In terms of assembly, component of the lipopolysaccharide transport and assembly complex. Interacts with LptE and LptA.

The protein resides in the cell outer membrane. Its function is as follows. Together with LptE, is involved in the assembly of lipopolysaccharide (LPS) at the surface of the outer membrane. This Ralstonia nicotianae (strain ATCC BAA-1114 / GMI1000) (Ralstonia solanacearum) protein is LPS-assembly protein LptD.